We begin with the raw amino-acid sequence, 127 residues long: Aspartate 1-decarboxylase (127 aa).

The active-site Schiff-base intermediate with substrate; via pyruvic acid is the Ser-25. Residue Ser-25 is modified to Pyruvic acid (Ser). Residue Thr-57 coordinates substrate. Tyr-58 (proton donor) is an active-site residue. A substrate-binding site is contributed by 73–75; the sequence is GSA.

This sequence belongs to the PanD family. In terms of assembly, heterooctamer of four alpha and four beta subunits. Pyruvate is required as a cofactor. Post-translationally, is synthesized initially as an inactive proenzyme, which is activated by self-cleavage at a specific serine bond to produce a beta-subunit with a hydroxyl group at its C-terminus and an alpha-subunit with a pyruvoyl group at its N-terminus.

It localises to the cytoplasm. It catalyses the reaction L-aspartate + H(+) = beta-alanine + CO2. The protein operates within cofactor biosynthesis; (R)-pantothenate biosynthesis; beta-alanine from L-aspartate: step 1/1. Functionally, catalyzes the pyruvoyl-dependent decarboxylation of aspartate to produce beta-alanine. In Polaromonas naphthalenivorans (strain CJ2), this protein is Aspartate 1-decarboxylase.